A 515-amino-acid chain; its full sequence is Protein DETOXIFICATION 32 (515 aa).

The segment covering 1–26 (METLNVDHEDTISSEQEHRAHTKSDT) has biased composition (basic and acidic residues). Residues 1 to 30 (METLNVDHEDTISSEQEHRAHTKSDTDMPP) are disordered. 12 consecutive transmembrane segments (helical) span residues 48–68 (LWWL…LGAV), 90–110 (VISG…ATLC), 131–151 (IILN…TPLL), 167–187 (FSLW…TAKF), 194–214 (VIAM…LSWL), 225–245 (GGAV…IVYI), 276–296 (AVMV…AGYL), 303–323 (VAAL…AFGF), 347–367 (LIVA…TLIV), 392–412 (LLAL…VAVG), 418–438 (IVAY…GLVL), and 448–468 (GIWT…LFII). Residues 488 to 497 (GDQSNKREEI) show a composition bias toward basic and acidic residues. The disordered stretch occupies residues 488–515 (GDQSNKREEIDLCEEDENNSNGENNHRK). Positions 506-515 (NSNGENNHRK) are enriched in low complexity.

The protein belongs to the multi antimicrobial extrusion (MATE) (TC 2.A.66.1) family.

The protein localises to the membrane. The chain is Protein DETOXIFICATION 32 from Arabidopsis thaliana (Mouse-ear cress).